The sequence spans 224 residues: Lipoprotein-releasing system ATP-binding protein LolD (224 aa).

One can recognise an ABC transporter domain in the interval 4–224; sequence YTAKDISKNY…TLLDGSLQEE (221 aa). 40–47 provides a ligand contact to ATP; the sequence is GASGSGKT.

The protein belongs to the ABC transporter superfamily. Lipoprotein translocase (TC 3.A.1.125) family. In terms of assembly, the complex is composed of two ATP-binding proteins (LolD) and two transmembrane proteins (LolC and LolE).

It localises to the cell inner membrane. Functionally, part of the ABC transporter complex LolCDE involved in the translocation of mature outer membrane-directed lipoproteins, from the inner membrane to the periplasmic chaperone, LolA. Responsible for the formation of the LolA-lipoprotein complex in an ATP-dependent manner. The sequence is that of Lipoprotein-releasing system ATP-binding protein LolD from Desulfotalea psychrophila (strain LSv54 / DSM 12343).